We begin with the raw amino-acid sequence, 234 residues long: Probable Ufm1-specific protease 1 (234 aa).

Residues Cys70, Asp194, and His196 contribute to the active site.

It belongs to the peptidase C78 family.

Functionally, thiol protease which recognizes and hydrolyzes the peptide bond at the C-terminal Gly of UFM1, a ubiquitin-like modifier protein bound to a number of target proteins. This Drosophila melanogaster (Fruit fly) protein is Probable Ufm1-specific protease 1.